The sequence spans 298 residues: 4-hydroxy-tetrahydrodipicolinate synthase (298 aa).

Thr51 lines the pyruvate pocket. Tyr139 functions as the Proton donor/acceptor in the catalytic mechanism. Lys167 functions as the Schiff-base intermediate with substrate in the catalytic mechanism. Ile209 is a binding site for pyruvate.

Belongs to the DapA family. In terms of assembly, homotetramer; dimer of dimers.

The protein resides in the cytoplasm. It catalyses the reaction L-aspartate 4-semialdehyde + pyruvate = (2S,4S)-4-hydroxy-2,3,4,5-tetrahydrodipicolinate + H2O + H(+). It functions in the pathway amino-acid biosynthesis; L-lysine biosynthesis via DAP pathway; (S)-tetrahydrodipicolinate from L-aspartate: step 3/4. Functionally, catalyzes the condensation of (S)-aspartate-beta-semialdehyde [(S)-ASA] and pyruvate to 4-hydroxy-tetrahydrodipicolinate (HTPA). The polypeptide is 4-hydroxy-tetrahydrodipicolinate synthase (Haemophilus influenzae (strain PittEE)).